The primary structure comprises 485 residues: Pre-glycoprotein polyprotein GP complex (485 aa).

The N-myristoyl glycine; by host moiety is linked to residue Gly2. Topologically, residues 2–17 are extracellular; the sequence is GQLISFFGEIPTILQE. The chain crosses the membrane as a helical span at residues 18–33; sequence ALNIALIAVSIIATIK. Topologically, residues 34–58 are cytoplasmic; that stretch reads GVVNVWKSGLIQLLMFVMLAGRSCS. Cys57 serves as a coordination point for Zn(2+). Topologically, residues 59 to 424 are extracellular; that stretch reads VQIGHHLELE…QGRTPLSLVD (366 aa). 4 disulfide bridges follow: Cys85–Cys225, Cys271–Cys284, Cys293–Cys302, and Cys356–Cys377. N-linked (GlcNAc...) asparagine; by host glycans are attached at residues Asn88, Asn128, Asn179, and Asn218. Asn357, Asn365, Asn382, and Asn387 each carry an N-linked (GlcNAc...) asparagine; by host glycan. A helical membrane pass occupies residues 425–445; sequence VCFWSTLFYTASIFLHLIRIP. The Cytoplasmic segment spans residues 446 to 485; that stretch reads THRHIVGEGCPKPHRLRADSTCACGLYKQKRRPLKWVRSN. Residues His447, His449, Cys455, His459, Cys467, and Cys469 each coordinate Zn(2+).

It belongs to the arenaviridae GPC protein family. In terms of assembly, interacts with glycoprotein G2. Part of the GP complex (GP-C) together with glycoprotein G1 and glycoprotein G2. The GP-complex interacts with protein Z, which interacts with ribonucleocapsid; these interactions may induce virion budding. Homotrimer; disulfide-linked. In pre-fusion state, G1 homotrimers bind G2 homotrimers via ionic interactions. Part of the GP complex (GP-C) together with glycoprotein G2 and the stable signal peptide. The GP-complex interacts with protein Z, which interacts with ribonucleocapsid; these interactions may induce virion budding. As to quaternary structure, homotrimer. Interacts with the stable signal peptide. In pre-fusion state, G2 homotrimers bind G1 homotrimers via ionic interactions. Part of the GP complex (GP-C) together with glycoprotein G1 and the stable signal peptide. Acidification in the endosome triggers rearrangements, which ultimately leads to a 6 helix bundle formed by the two heptad repeat domains (HR1 and HR2) in post-fusion state. The GP-complex interacts with protein Z, which interacts with ribonucleocapsid; these interactions may induce virion budding. Specific enzymatic cleavages in vivo yield mature proteins. GP-C polyprotein is cleaved in the endoplasmic reticulum by the host protease MBTPS1. Only cleaved glycoprotein is incorporated into virions. In terms of processing, the SSP remains stably associated with the GP complex following cleavage by signal peptidase and plays crucial roles in the trafficking of GP through the secretory pathway. Post-translationally, myristoylation is necessary for GP2-mediated fusion activity.

It localises to the virion membrane. The protein localises to the host endoplasmic reticulum membrane. It is found in the host Golgi apparatus membrane. The protein resides in the host cell membrane. Functions as a cleaved signal peptide that is retained as the third component of the GP complex (GP-C). Helps to stabilize the spike complex in its native conformation. The SSP is required for efficient glycoprotein expression, post-translational maturation cleavage of G1 and G2, glycoprotein transport to the cell surface plasma membrane, formation of infectious virus particles, and acid pH-dependent glycoprotein-mediated cell fusion. Its function is as follows. Forms the virion spikes together with glycoprotein G2. The glycoprotein spike trimers are connected to the underlying matrix. Interacts with the host receptor leading to virus endocytosis. In terms of biological role, forms the virion spikes together with glycoprotein G1. The glycoprotein spike trimers are connected to the underlying matrix. Class I viral fusion protein that directs fusion of viral and host endosomal membranes, leading to delivery of the nucleocapsid into the cytoplasm. Membrane fusion is mediated by irreversible conformational changes induced by acidification. This is Pre-glycoprotein polyprotein GP complex from Sigmodon hispidus (Hispid cotton rat).